Consider the following 759-residue polypeptide: 1,4-alpha-glucan branching enzyme GlgB (759 aa).

Residues 1–21 (MAKTKGLPKDTAVTPSPHLRP) are disordered. Aspartate 422 (nucleophile) is an active-site residue. Glutamate 475 serves as the catalytic Proton donor.

This sequence belongs to the glycosyl hydrolase 13 family. GlgB subfamily. Monomer.

It carries out the reaction Transfers a segment of a (1-&gt;4)-alpha-D-glucan chain to a primary hydroxy group in a similar glucan chain.. Its pathway is glycan biosynthesis; glycogen biosynthesis. Its function is as follows. Catalyzes the formation of the alpha-1,6-glucosidic linkages in glycogen by scission of a 1,4-alpha-linked oligosaccharide from growing alpha-1,4-glucan chains and the subsequent attachment of the oligosaccharide to the alpha-1,6 position. This chain is 1,4-alpha-glucan branching enzyme GlgB, found in Mycobacterium sp. (strain JLS).